A 68-amino-acid polypeptide reads, in one-letter code: MPIVSKYSNERVEKIIQDLLDVLVKEEVTPDLALMCLGNAVTNIIAQVPESKRVAVVDNFTKALKQSV.

This sequence belongs to the UPF0352 family.

This chain is UPF0352 protein CPS_2611, found in Colwellia psychrerythraea (strain 34H / ATCC BAA-681) (Vibrio psychroerythus).